The sequence spans 314 residues: Small ribosomal subunit biogenesis GTPase RsgA (314 aa).

The disordered stretch occupies residues 1-21; it reads MKRAPTKQPAKPAARGGERAQ. In terms of domain architecture, CP-type G spans 85–246; sequence SDQFKSKLFA…LIDSPGFQEF (162 aa). GTP is bound by residues 134–137 and 188–196; these read NKID and GQSGMGKST. Residues C270, C275, H277, and C283 each contribute to the Zn(2+) site.

The protein belongs to the TRAFAC class YlqF/YawG GTPase family. RsgA subfamily. In terms of assembly, monomer. Associates with 30S ribosomal subunit, binds 16S rRNA. Requires Zn(2+) as cofactor.

The protein resides in the cytoplasm. In terms of biological role, one of several proteins that assist in the late maturation steps of the functional core of the 30S ribosomal subunit. Helps release RbfA from mature subunits. May play a role in the assembly of ribosomal proteins into the subunit. Circularly permuted GTPase that catalyzes slow GTP hydrolysis, GTPase activity is stimulated by the 30S ribosomal subunit. The chain is Small ribosomal subunit biogenesis GTPase RsgA from Burkholderia pseudomallei (strain 1710b).